The following is a 423-amino-acid chain: tRNA(Ile)-lysidine synthase (423 aa).

Residue 29-34 coordinates ATP; sequence SGGKDS.

The protein belongs to the tRNA(Ile)-lysidine synthase family.

It localises to the cytoplasm. It catalyses the reaction cytidine(34) in tRNA(Ile2) + L-lysine + ATP = lysidine(34) in tRNA(Ile2) + AMP + diphosphate + H(+). Functionally, ligates lysine onto the cytidine present at position 34 of the AUA codon-specific tRNA(Ile) that contains the anticodon CAU, in an ATP-dependent manner. Cytidine is converted to lysidine, thus changing the amino acid specificity of the tRNA from methionine to isoleucine. The sequence is that of tRNA(Ile)-lysidine synthase from Lactococcus lactis subsp. lactis (strain IL1403) (Streptococcus lactis).